The following is a 96-amino-acid chain: Co-chaperonin GroES 2 (96 aa).

Belongs to the GroES chaperonin family. Heptamer of 7 subunits arranged in a ring. Interacts with the chaperonin GroEL.

The protein localises to the cytoplasm. Its function is as follows. Together with the chaperonin GroEL, plays an essential role in assisting protein folding. The GroEL-GroES system forms a nano-cage that allows encapsulation of the non-native substrate proteins and provides a physical environment optimized to promote and accelerate protein folding. GroES binds to the apical surface of the GroEL ring, thereby capping the opening of the GroEL channel. In Vibrio parahaemolyticus serotype O3:K6 (strain RIMD 2210633), this protein is Co-chaperonin GroES 2.